Reading from the N-terminus, the 222-residue chain is E3 ubiquitin-protein ligase RNF138 (222 aa).

The RING-type zinc-finger motif lies at 17-57 (CPVCQEILQTPVRTQTCRHVFCRKCFMLAMKSGGAYCPLCR). Zn(2+) is bound by residues C85, C88, H100, and C104. Residues 85-104 (CMYCGKMMKLHYMKLHYKSC) form a C2HC RNF-type zinc finger. 2 C2H2-type zinc fingers span residues 134–157 (YKCPLCSEHNLNQRSLLEHCNNVH) and 164–192 (MVCPICATLPWGDPIQTTGNVIAHLNARH). One can recognise a UIM domain in the interval 202–220 (INIDEEAQFQIAVANSYKI).

As to quaternary structure, interacts with nlk.2 (via C-terminus) and ube2k. In terms of processing, auto-ubiquitinated.

The protein localises to the chromosome. The enzyme catalyses S-ubiquitinyl-[E2 ubiquitin-conjugating enzyme]-L-cysteine + [acceptor protein]-L-lysine = [E2 ubiquitin-conjugating enzyme]-L-cysteine + N(6)-ubiquitinyl-[acceptor protein]-L-lysine.. The protein operates within protein modification; protein ubiquitination. Its function is as follows. E3 ubiquitin-protein ligase involved in DNA damage response by promoting DNA resection and homologous recombination. Recruited to sites of double-strand breaks following DNA damage and specifically promotes double-strand break repair via homologous recombination. Together with nlk.2, involved in the ubiquitination and degradation of TCF/LEF. Also exhibits auto-ubiquitination activity in combination with ube2k. May act as a negative regulator in the Wnt/beta-catenin-mediated signaling pathway. This chain is E3 ubiquitin-protein ligase RNF138 (rnf138), found in Xenopus laevis (African clawed frog).